Consider the following 105-residue polypeptide: Putative toxin MazF8 (105 aa).

In terms of assembly, forms a complex with cognate antitoxin MazE8.

In terms of biological role, putative toxic component of a type II toxin-antitoxin (TA) system. Acts as an endoribonuclease. Neutralized by coexpression with cognate antitoxin MazE8. The protein is Putative toxin MazF8 (mazF8) of Mycobacterium tuberculosis (strain CDC 1551 / Oshkosh).